A 200-amino-acid chain; its full sequence is Recombination protein RecR (200 aa).

Residues 58-75 form a C4-type zinc finger; that stretch reads CPCCFCLKNFPESQCEFC. One can recognise a Toprim domain in the interval 82–177; it reads STLCIVASPK…SISRLALGLP (96 aa).

This sequence belongs to the RecR family.

Its function is as follows. May play a role in DNA repair. It seems to be involved in an RecBC-independent recombinational process of DNA repair. It may act with RecF and RecO. This Chlamydia felis (strain Fe/C-56) (Chlamydophila felis) protein is Recombination protein RecR.